Here is a 390-residue protein sequence, read N- to C-terminus: (S)-8-oxocitronellyl enol synthase CYC2 (390 aa).

Residues 35–37 (TGI), 63–64 (RR), 81–82 (DI), 105–106 (TW), and Q143 contribute to the NADP(+) site. Active-site residues include K147 and Y179. Residues K147 and Y179 each contribute to the substrate site. Residues Y179 and 213–215 (SMM) contribute to the NADP(+) site.

Belongs to the short-chain dehydrogenases/reductases (SDR) family. Highly divergent.

It catalyses the reaction (S)-8-oxocitronellyl enol + NADP(+) = (6E)-8-oxogeranial + NADPH + H(+). The enzyme catalyses (S)-8-oxocitronellyl enol + NAD(+) = (6E)-8-oxogeranial + NADH + H(+). Iridoid synthase that catalyzes the first step in generation of the iridoid ring scaffold using the linear monoterpene (6E)-8-oxogeranial as substrate. Iridoids comprise a large family of distinctive bicyclic monoterpenes that possess a wide range of pharmacological activities, including anticancer, anti-inflammatory, antifungal and antibacterial activities. This chain is (S)-8-oxocitronellyl enol synthase CYC2, found in Camptotheca acuminata (Happy tree).